A 148-amino-acid chain; its full sequence is Lysozyme-like protein 6 (148 aa).

An N-terminal signal peptide occupies residues 1–19 (MLKALFICVASCLLVVNDG). The C-type lysozyme domain occupies 20–148 (NIIHRCSLAK…SYWMTGCHLG (129 aa)). Disulfide bonds link C25–C145, C49–C133, C83–C98, and C94–C112. E54 is an active-site residue. A glycan (N-linked (GlcNAc...) asparagine) is linked at N58. The active site involves D71.

Belongs to the glycosyl hydrolase 22 family. In terms of assembly, monomer. As to expression, expressed strongly in testis and epididymis and weakly in seminal vesicle, vas deferens, kidney and spleen. Highly expressed in primary spermatocytes and round spermatids (at protein level).

The protein resides in the secreted. It is found in the cell surface. The protein localises to the cell projection. It localises to the cilium. Its subcellular location is the flagellum. The enzyme catalyses Hydrolysis of (1-&gt;4)-beta-linkages between N-acetylmuramic acid and N-acetyl-D-glucosamine residues in a peptidoglycan and between N-acetyl-D-glucosamine residues in chitodextrins.. In terms of biological role, may be involved sperm-egg plasma membrane adhesion and fusion during fertilization. Exhibits bacteriolytic activity in vitro against Micrococcus luteus and Staphylococcus aureus. Shows weak bacteriolytic activity against Gram-positive bacteria at physiological pH. Bacteriolytic activity is pH-dependent, with a maximum at around pH 5.6. The chain is Lysozyme-like protein 6 (Lyzl6) from Mus musculus (Mouse).